The primary structure comprises 244 residues: uncharacterized protein (244 aa).

The interval 30–49 (RETNESPKSQNPSEEATTVN) is disordered. A compositionally biased stretch (polar residues) spans 35 to 49 (SPKSQNPSEEATTVN). Helical transmembrane passes span 96-116 (LWGTCVILSTLFWSYYVLSNS), 128-148 (LLFILIIALDALLTVSLFGLF), 171-191 (GFFINVLSTMVQALVTVTIAF), and 194-214 (FVTIDFPIYVFSSLFLYHPLS). The interval 224-244 (QLDGSGERKTDSSLVHQNPPN) is disordered. Residues 235–244 (SSLVHQNPPN) are compositionally biased toward polar residues.

The protein resides in the nucleus membrane. This is an uncharacterized protein from Schizosaccharomyces pombe (strain 972 / ATCC 24843) (Fission yeast).